A 182-amino-acid polypeptide reads, in one-letter code: Transcription termination/antitermination protein NusG (182 aa).

Residues 131-161 form the KOW domain; it reads GEVVRVNEGPFADFNGTVEEVDYEKSRLKVS.

The protein belongs to the NusG family.

Its function is as follows. Participates in transcription elongation, termination and antitermination. The polypeptide is Transcription termination/antitermination protein NusG (Vibrio parahaemolyticus serotype O3:K6 (strain RIMD 2210633)).